The sequence spans 629 residues: Probable indole-3-acetic acid-amido synthetase GH3.4 (629 aa).

The protein belongs to the IAA-amido conjugating enzyme family. Expressed in flowers.

May catalyze the synthesis of indole-3-acetic acid (IAA)-amino acid conjugates, providing a mechanism for the plant to cope with the presence of excess auxin. This Oryza sativa subsp. japonica (Rice) protein is Probable indole-3-acetic acid-amido synthetase GH3.4 (GH3.4).